The sequence spans 342 residues: Heat-inducible transcription repressor HrcA (342 aa).

It belongs to the HrcA family.

Functionally, negative regulator of class I heat shock genes (grpE-dnaK-dnaJ and groELS operons). Prevents heat-shock induction of these operons. The chain is Heat-inducible transcription repressor HrcA from Leptospira interrogans serogroup Icterohaemorrhagiae serovar copenhageni (strain Fiocruz L1-130).